Consider the following 113-residue polypeptide: Large ribosomal subunit protein uL22 (113 aa).

It belongs to the universal ribosomal protein uL22 family. In terms of assembly, part of the 50S ribosomal subunit.

Functionally, this protein binds specifically to 23S rRNA; its binding is stimulated by other ribosomal proteins, e.g. L4, L17, and L20. It is important during the early stages of 50S assembly. It makes multiple contacts with different domains of the 23S rRNA in the assembled 50S subunit and ribosome. In terms of biological role, the globular domain of the protein is located near the polypeptide exit tunnel on the outside of the subunit, while an extended beta-hairpin is found that lines the wall of the exit tunnel in the center of the 70S ribosome. The protein is Large ribosomal subunit protein uL22 of Geobacillus thermodenitrificans (strain NG80-2).